We begin with the raw amino-acid sequence, 443 residues long: Ribosomal protein uS12 methylthiotransferase RimO (443 aa).

The 111-residue stretch at 8–118 (PKVGFVSLGC…VVNAVHEVVP (111 aa)) folds into the MTTase N-terminal domain. Residues Cys-17, Cys-53, Cys-82, Cys-151, Cys-155, and Cys-158 each contribute to the [4Fe-4S] cluster site. Residues 137-375 (LTPRHYAYLK…MAHQQAISAA (239 aa)) form the Radical SAM core domain. The TRAM domain maps to 378–443 (QQRIGKEIEV…DEYDMWAEPI (66 aa)).

It belongs to the methylthiotransferase family. RimO subfamily. [4Fe-4S] cluster is required as a cofactor.

The protein localises to the cytoplasm. It carries out the reaction L-aspartate(89)-[ribosomal protein uS12]-hydrogen + (sulfur carrier)-SH + AH2 + 2 S-adenosyl-L-methionine = 3-methylsulfanyl-L-aspartate(89)-[ribosomal protein uS12]-hydrogen + (sulfur carrier)-H + 5'-deoxyadenosine + L-methionine + A + S-adenosyl-L-homocysteine + 2 H(+). Functionally, catalyzes the methylthiolation of an aspartic acid residue of ribosomal protein uS12. This is Ribosomal protein uS12 methylthiotransferase RimO from Pseudomonas entomophila (strain L48).